A 364-amino-acid chain; its full sequence is Protein trichome birefringence-like 40 (364 aa).

The chain crosses the membrane as a helical; Signal-anchor for type II membrane protein span at residues 9 to 25; the sequence is LASLSLILFSSFPGLLA. The GDS motif signature appears at 118–120; it reads GDS. A DCXHWCLPGXXDXWN motif motif is present at residues 341 to 355; the sequence is DCSHWCLPGLPDTWN.

It belongs to the PC-esterase family. TBL subfamily.

It is found in the membrane. In terms of biological role, may act as a bridging protein that binds pectin and other cell wall polysaccharides. Probably involved in maintaining esterification of pectins. May be involved in the specific O-acetylation of cell wall polymers. The sequence is that of Protein trichome birefringence-like 40 (TBL40) from Arabidopsis thaliana (Mouse-ear cress).